A 559-amino-acid chain; its full sequence is BTB/POZ domain-containing protein At5g47800 (559 aa).

Residues Asn-28 to Ala-96 enclose the BTB domain. Residues Asp-199 to Ser-476 enclose the NPH3 domain. The residue at position 417 (Tyr-417) is a Phosphotyrosine. Residues Gly-477–Glu-489 are compositionally biased toward low complexity. Disordered regions lie at residues Gly-477–His-502 and Glu-524–Arg-559. 2 stretches are compositionally biased toward basic and acidic residues: residues Thr-492–His-502 and Glu-524–Lys-541.

This sequence belongs to the NPH3 family.

The protein operates within protein modification; protein ubiquitination. May act as a substrate-specific adapter of an E3 ubiquitin-protein ligase complex (CUL3-RBX1-BTB) which mediates the ubiquitination and subsequent proteasomal degradation of target proteins. This chain is BTB/POZ domain-containing protein At5g47800, found in Arabidopsis thaliana (Mouse-ear cress).